A 125-amino-acid chain; its full sequence is Aspartate 1-decarboxylase (125 aa).

The active-site Schiff-base intermediate with substrate; via pyruvic acid is the Ser25. The residue at position 25 (Ser25) is a Pyruvic acid (Ser). Thr57 contacts substrate. The active-site Proton donor is the Tyr58. 71–73 (GAA) contributes to the substrate binding site.

It belongs to the PanD family. As to quaternary structure, heterooctamer of four alpha and four beta subunits. Requires pyruvate as cofactor. In terms of processing, is synthesized initially as an inactive proenzyme, which is activated by self-cleavage at a specific serine bond to produce a beta-subunit with a hydroxyl group at its C-terminus and an alpha-subunit with a pyruvoyl group at its N-terminus.

The protein localises to the cytoplasm. It carries out the reaction L-aspartate + H(+) = beta-alanine + CO2. Its pathway is cofactor biosynthesis; (R)-pantothenate biosynthesis; beta-alanine from L-aspartate: step 1/1. Catalyzes the pyruvoyl-dependent decarboxylation of aspartate to produce beta-alanine. This chain is Aspartate 1-decarboxylase, found in Hydrogenobaculum sp. (strain Y04AAS1).